The chain runs to 330 residues: Ketol-acid reductoisomerase (NADP(+)) (330 aa).

The region spanning 2-181 (AKVYYDNDVN…GATRAGVIET (180 aa)) is the KARI N-terminal Rossmann domain. Residues 25-28 (YGSQ), R48, S52, and 82-85 (DEVQ) contribute to the NADP(+) site. H107 is an active-site residue. NADP(+) is bound at residue G133. The KARI C-terminal knotted domain occupies 182 to 327 (TFKEETETDL…ADLRMMMPFI (146 aa)). 4 residues coordinate Mg(2+): D190, E194, E226, and E230. S251 contributes to the substrate binding site.

It belongs to the ketol-acid reductoisomerase family. The cofactor is Mg(2+).

It catalyses the reaction (2R)-2,3-dihydroxy-3-methylbutanoate + NADP(+) = (2S)-2-acetolactate + NADPH + H(+). It carries out the reaction (2R,3R)-2,3-dihydroxy-3-methylpentanoate + NADP(+) = (S)-2-ethyl-2-hydroxy-3-oxobutanoate + NADPH + H(+). It participates in amino-acid biosynthesis; L-isoleucine biosynthesis; L-isoleucine from 2-oxobutanoate: step 2/4. It functions in the pathway amino-acid biosynthesis; L-valine biosynthesis; L-valine from pyruvate: step 2/4. Involved in the biosynthesis of branched-chain amino acids (BCAA). Catalyzes an alkyl-migration followed by a ketol-acid reduction of (S)-2-acetolactate (S2AL) to yield (R)-2,3-dihydroxy-isovalerate. In the isomerase reaction, S2AL is rearranged via a Mg-dependent methyl migration to produce 3-hydroxy-3-methyl-2-ketobutyrate (HMKB). In the reductase reaction, this 2-ketoacid undergoes a metal-dependent reduction by NADPH to yield (R)-2,3-dihydroxy-isovalerate. The polypeptide is Ketol-acid reductoisomerase (NADP(+)) (Macrococcus caseolyticus (strain JCSC5402) (Macrococcoides caseolyticum)).